The following is a 907-amino-acid chain: Translation initiation factor IF-2 (907 aa).

A disordered region spans residues 26-317 (DAGMKKSSSD…KPKSMQHGFD (292 aa)). 2 stretches are compositionally biased toward basic and acidic residues: residues 28–44 (GMKK…EKQK) and 101–248 (SAIE…DTDY). The span at 299–308 (KGGRKGKLSK) shows a compositional bias: basic residues. The region spanning 406–575 (PRAPVVTIMG…LLQAEVLELT (170 aa)) is the tr-type G domain. The G1 stretch occupies residues 415–422 (GHVDHGKT). A GTP-binding site is contributed by 415–422 (GHVDHGKT). A G2 region spans residues 440-444 (GITQH). The G3 stretch occupies residues 461 to 464 (DTPG). GTP is bound by residues 461-465 (DTPGH) and 515-518 (NKID). Positions 515–518 (NKID) are G4. The interval 551–553 (SAK) is G5.

This sequence belongs to the TRAFAC class translation factor GTPase superfamily. Classic translation factor GTPase family. IF-2 subfamily.

Its subcellular location is the cytoplasm. In terms of biological role, one of the essential components for the initiation of protein synthesis. Protects formylmethionyl-tRNA from spontaneous hydrolysis and promotes its binding to the 30S ribosomal subunits. Also involved in the hydrolysis of GTP during the formation of the 70S ribosomal complex. This Vibrio vulnificus (strain CMCP6) protein is Translation initiation factor IF-2.